A 396-amino-acid polypeptide reads, in one-letter code: Succinyl-diaminopimelate desuccinylase (396 aa).

Histidine 74 contributes to the Zn(2+) binding site. The active site involves aspartate 76. Residue aspartate 107 coordinates Zn(2+). Residue glutamate 142 is the Proton acceptor of the active site. The Zn(2+) site is built by glutamate 143, glutamate 171, and histidine 360.

The protein belongs to the peptidase M20A family. DapE subfamily. As to quaternary structure, homodimer. Zn(2+) serves as cofactor. The cofactor is Co(2+).

The enzyme catalyses N-succinyl-(2S,6S)-2,6-diaminopimelate + H2O = (2S,6S)-2,6-diaminopimelate + succinate. The protein operates within amino-acid biosynthesis; L-lysine biosynthesis via DAP pathway; LL-2,6-diaminopimelate from (S)-tetrahydrodipicolinate (succinylase route): step 3/3. Functionally, catalyzes the hydrolysis of N-succinyl-L,L-diaminopimelic acid (SDAP), forming succinate and LL-2,6-diaminopimelate (DAP), an intermediate involved in the bacterial biosynthesis of lysine and meso-diaminopimelic acid, an essential component of bacterial cell walls. The protein is Succinyl-diaminopimelate desuccinylase of Methylobacterium nodulans (strain LMG 21967 / CNCM I-2342 / ORS 2060).